Reading from the N-terminus, the 204-residue chain is Peptide deformylase (204 aa).

Fe cation is bound by residues Cys-131 and His-174. Residue Glu-175 is part of the active site. Position 178 (His-178) interacts with Fe cation.

Belongs to the polypeptide deformylase family. The cofactor is Fe(2+).

The catalysed reaction is N-terminal N-formyl-L-methionyl-[peptide] + H2O = N-terminal L-methionyl-[peptide] + formate. Functionally, removes the formyl group from the N-terminal Met of newly synthesized proteins. Requires at least a dipeptide for an efficient rate of reaction. N-terminal L-methionine is a prerequisite for activity but the enzyme has broad specificity at other positions. The protein is Peptide deformylase of Streptococcus mutans serotype c (strain ATCC 700610 / UA159).